A 140-amino-acid chain; its full sequence is Protein PsiE homolog (140 aa).

Helical transmembrane passes span 16-36 (IVLQYILNVALICLGVVLSVF), 57-77 (YHLIDSIVVFFLYFEFIVMII), 85-105 (HFPLRYFIYIGITAIVRLIII), and 110-130 (PLDLLLYACAIFVLISALFIA).

Belongs to the PsiE family.

The protein resides in the cell membrane. In Bacillus cereus (strain ATCC 14579 / DSM 31 / CCUG 7414 / JCM 2152 / NBRC 15305 / NCIMB 9373 / NCTC 2599 / NRRL B-3711), this protein is Protein PsiE homolog.